A 289-amino-acid chain; its full sequence is Diaminopimelate epimerase (289 aa).

Substrate is bound by residues Asn-11 and Asn-78. Catalysis depends on Cys-87, which acts as the Proton donor. Substrate-binding positions include 88 to 89 (GN), Asn-163, Asn-199, and 217 to 218 (ER). The active-site Proton acceptor is the Cys-226. Residue 227–228 (GT) participates in substrate binding.

The protein belongs to the diaminopimelate epimerase family. In terms of assembly, homodimer.

It is found in the cytoplasm. It carries out the reaction (2S,6S)-2,6-diaminopimelate = meso-2,6-diaminopimelate. It participates in amino-acid biosynthesis; L-lysine biosynthesis via DAP pathway; DL-2,6-diaminopimelate from LL-2,6-diaminopimelate: step 1/1. In terms of biological role, catalyzes the stereoinversion of LL-2,6-diaminopimelate (L,L-DAP) to meso-diaminopimelate (meso-DAP), a precursor of L-lysine and an essential component of the bacterial peptidoglycan. This Mycolicibacterium vanbaalenii (strain DSM 7251 / JCM 13017 / BCRC 16820 / KCTC 9966 / NRRL B-24157 / PYR-1) (Mycobacterium vanbaalenii) protein is Diaminopimelate epimerase.